The chain runs to 277 residues: uncharacterized protein (277 aa).

The next 7 helical transmembrane spans lie at 23 to 43 (CIGG…TAFI), 61 to 81 (FLIY…IIGG), 117 to 137 (LVLL…FGIF), 144 to 164 (IIGA…VISL), 197 to 217 (YIIL…IVVL), 221 to 241 (IIDI…IIYI), and 243 to 263 (IKGI…VFSI).

It to M.jannaschii MJ1189.

The protein resides in the cell membrane. This is an uncharacterized protein from Methanocaldococcus jannaschii (strain ATCC 43067 / DSM 2661 / JAL-1 / JCM 10045 / NBRC 100440) (Methanococcus jannaschii).